Consider the following 156-residue polypeptide: uncharacterized protein (156 aa).

Transmembrane regions (helical) follow at residues 21-41, 54-74, and 80-100; these read GVLFSSFALLFMFFNSLAISL, TICSSLIPCRTLIFSLWIDFA, and SVLVCCFSASLPLVFFFWALF.

The protein localises to the membrane. This is an uncharacterized protein from Saccharomyces cerevisiae (strain ATCC 204508 / S288c) (Baker's yeast).